Reading from the N-terminus, the 794-residue chain is Interphotoreceptor matrix proteoglycan 1 (794 aa).

The signal sequence occupies residues 1-20 (MHLEAARVIFFLWIFLQVQG). Over residues 202-213 (MTTAQRNPQLHP) the composition is skewed to polar residues. Disordered regions lie at residues 202–221 (MTTA…RVPT), 314–355 (KGKA…LYPT), and 413–449 (SPEL…AMTS). Residues 236 to 357 (LEQKVELSIS…KQRELYPTAS (122 aa)) enclose the SEA 1 domain. The span at 332-351 (NKIESEGDPRGTTEEEKQRE) shows a compositional bias: basic and acidic residues. Residues threonine 425 and threonine 439 are each glycosylated (O-linked (GalNAc...) threonine). O-linked (GalNAc...) serine glycosylation is present at serine 443. Threonine 448 and threonine 450 each carry an O-linked (GalNAc...) threonine glycan. The 114-residue stretch at 579 to 692 (RELVVFFSLR…YSLDVEPADQ (114 aa)) folds into the SEA 2 domain. Residue asparagine 624 is glycosylated (N-linked (GlcNAc...) asparagine). The Heparin- and hyaluronan-binding signature appears at 629–637 (KQLEILNFR). N-linked (GlcNAc...) asparagine glycosylation is present at asparagine 656.

In terms of processing, highly glycosylated (N- and O-linked carbohydrates and sialic acid).

The protein resides in the cell projection. It localises to the cilium. It is found in the photoreceptor outer segment. The protein localises to the secreted. Its subcellular location is the extracellular space. The protein resides in the extracellular matrix. It localises to the interphotoreceptor matrix. It is found in the photoreceptor inner segment. In terms of biological role, chondroitin sulfate-, heparin- and hyaluronan-binding protein. May serve to form a basic macromolecular scaffold comprising the insoluble interphotoreceptor matrix. The polypeptide is Interphotoreceptor matrix proteoglycan 1 (IMPG1) (Bos taurus (Bovine)).